A 343-amino-acid chain; its full sequence is Cyclin-Y-like protein 1 (343 aa).

Positions 1–48 are disordered; sequence MGNTVTCCVSPDASPKAGRDRAVTERGEPYQAQVELQETDPGPHLQHI. Over residues 17 to 28 the composition is skewed to basic and acidic residues; that stretch reads AGRDRAVTERGE. The region spanning 145–267 is the Cyclin N-terminal domain; the sequence is EIFDEKLHPL…FLELLQFNIN (123 aa).

Belongs to the cyclin family. Cyclin Y subfamily.

It is found in the cell membrane. Key regulator of Wnt signaling implicated in various biological processes, such as embryonic neurogenesis. The polypeptide is Cyclin-Y-like protein 1 (ccnyl1) (Xenopus tropicalis (Western clawed frog)).